The sequence spans 88 residues: uncharacterized protein (88 aa).

This is an uncharacterized protein from Sputnik virophage.